The sequence spans 447 residues: Adenylosuccinate synthetase (447 aa).

GTP is bound by residues 35 to 41 (GDEGKGK) and 63 to 65 (GHT). Asp36 serves as the catalytic Proton acceptor. Mg(2+) is bound by residues Asp36 and Gly63. Residues 36 to 39 (DEGK), 61 to 64 (NAGH), Thr153, Arg167, Asn245, Thr260, and Arg324 contribute to the IMP site. His64 (proton donor) is an active-site residue. 320–326 (VTTKRKR) is a substrate binding site. Residues Arg326, 352-354 (KLD), and 435-437 (GVG) contribute to the GTP site.

It belongs to the adenylosuccinate synthetase family. Homodimer. Mg(2+) is required as a cofactor.

It localises to the cytoplasm. It catalyses the reaction IMP + L-aspartate + GTP = N(6)-(1,2-dicarboxyethyl)-AMP + GDP + phosphate + 2 H(+). It participates in purine metabolism; AMP biosynthesis via de novo pathway; AMP from IMP: step 1/2. Its function is as follows. Plays an important role in the de novo pathway and in the salvage pathway of purine nucleotide biosynthesis. Catalyzes the first committed step in the biosynthesis of AMP from IMP. Plays a role in the regulation of adult life span. The polypeptide is Adenylosuccinate synthetase (Drosophila melanogaster (Fruit fly)).